A 246-amino-acid polypeptide reads, in one-letter code: Glucosamine-6-phosphate deaminase (246 aa).

Aspartate 67 functions as the Proton acceptor; for enolization step in the catalytic mechanism. Asparagine 136 acts as the For ring-opening step in catalysis. Histidine 138 functions as the Proton acceptor; for ring-opening step in the catalytic mechanism. Glutamate 143 serves as the catalytic For ring-opening step.

The protein belongs to the glucosamine/galactosamine-6-phosphate isomerase family. NagB subfamily.

It catalyses the reaction alpha-D-glucosamine 6-phosphate + H2O = beta-D-fructose 6-phosphate + NH4(+). The protein operates within amino-sugar metabolism; N-acetylneuraminate degradation; D-fructose 6-phosphate from N-acetylneuraminate: step 5/5. Functionally, catalyzes the reversible isomerization-deamination of glucosamine 6-phosphate (GlcN6P) to form fructose 6-phosphate (Fru6P) and ammonium ion. This is Glucosamine-6-phosphate deaminase from Halalkalibacterium halodurans (strain ATCC BAA-125 / DSM 18197 / FERM 7344 / JCM 9153 / C-125) (Bacillus halodurans).